Here is a 326-residue protein sequence, read N- to C-terminus: Undecaprenyl-diphosphatase (326 aa).

9 helical membrane passes run 11-31, 42-62, 90-110, 138-158, 165-185, 212-232, 242-262, 272-292, and 304-324; these read AFSL…IAVA, TGVI…LGFI, GVAF…WYFW, LGIG…KLLV, FFRS…LLAL, ALAL…GLFI, FSFL…LKGL, ILPL…AIAW, and IFVW…GMGF.

This sequence belongs to the UppP family.

Its subcellular location is the cell inner membrane. It catalyses the reaction di-trans,octa-cis-undecaprenyl diphosphate + H2O = di-trans,octa-cis-undecaprenyl phosphate + phosphate + H(+). In terms of biological role, catalyzes the dephosphorylation of undecaprenyl diphosphate (UPP). Confers resistance to bacitracin. This Synechocystis sp. (strain ATCC 27184 / PCC 6803 / Kazusa) protein is Undecaprenyl-diphosphatase.